The primary structure comprises 201 residues: Flavin prenyltransferase UbiX (201 aa).

FMN is bound by residues 23-25 (GAS), serine 49, 103-106 (SIKT), and arginine 138. 2 residues coordinate dimethylallyl phosphate: tyrosine 168 and lysine 184.

It belongs to the UbiX/PAD1 family.

The enzyme catalyses dimethylallyl phosphate + FMNH2 = prenylated FMNH2 + phosphate. Functionally, flavin prenyltransferase that catalyzes the synthesis of the prenylated FMN cofactor (prenyl-FMN) for 4-hydroxy-3-polyprenylbenzoic acid decarboxylase UbiD. The prenyltransferase is metal-independent and links a dimethylallyl moiety from dimethylallyl monophosphate (DMAP) to the flavin N5 and C6 atoms of FMN. This chain is Flavin prenyltransferase UbiX, found in Saccharolobus solfataricus (strain ATCC 35092 / DSM 1617 / JCM 11322 / P2) (Sulfolobus solfataricus).